We begin with the raw amino-acid sequence, 901 residues long: Protein translocase subunit SecA (901 aa).

Residues Gln87, 105-109, and Asp512 each bind ATP; that span reads GEGKT. Zn(2+) is bound by residues Cys885, Cys887, Cys896, and His897.

It belongs to the SecA family. As to quaternary structure, monomer and homodimer. Part of the essential Sec protein translocation apparatus which comprises SecA, SecYEG and auxiliary proteins SecDF-YajC and YidC. Requires Zn(2+) as cofactor.

Its subcellular location is the cell inner membrane. It localises to the cytoplasm. The catalysed reaction is ATP + H2O + cellular proteinSide 1 = ADP + phosphate + cellular proteinSide 2.. In terms of biological role, part of the Sec protein translocase complex. Interacts with the SecYEG preprotein conducting channel. Has a central role in coupling the hydrolysis of ATP to the transfer of proteins into and across the cell membrane, serving both as a receptor for the preprotein-SecB complex and as an ATP-driven molecular motor driving the stepwise translocation of polypeptide chains across the membrane. This chain is Protein translocase subunit SecA, found in Salmonella arizonae (strain ATCC BAA-731 / CDC346-86 / RSK2980).